The primary structure comprises 340 residues: Ferredoxin--NADP reductase (340 aa).

D33, Q41, Y46, A86, F120, D286, and T327 together coordinate FAD.

It belongs to the ferredoxin--NADP reductase type 2 family. Homodimer. FAD is required as a cofactor.

It catalyses the reaction 2 reduced [2Fe-2S]-[ferredoxin] + NADP(+) + H(+) = 2 oxidized [2Fe-2S]-[ferredoxin] + NADPH. In Rickettsia rickettsii (strain Sheila Smith), this protein is Ferredoxin--NADP reductase.